Here is a 137-residue protein sequence, read N- to C-terminus: Global transcriptional regulator Spx (137 aa).

C10 and C13 are disulfide-bonded.

Belongs to the ArsC family. Spx subfamily. Interacts with the C-terminal domain of the alpha subunit of the RNAP.

Its subcellular location is the cytoplasm. Functionally, global transcriptional regulator that plays a key role in stress response and exerts either positive or negative regulation of genes. Acts by interacting with the C-terminal domain of the alpha subunit of the RNA polymerase (RNAP). This interaction can enhance binding of RNAP to the promoter region of target genes and stimulate their transcription, or block interaction of RNAP with activator. This Streptococcus agalactiae serotype III (strain NEM316) protein is Global transcriptional regulator Spx.